The chain runs to 432 residues: D-amino acid dehydrogenase (432 aa).

An FAD-binding site is contributed by 3–17 (VVILGSGVVGVASAW).

It belongs to the DadA oxidoreductase family. The cofactor is FAD.

It catalyses the reaction a D-alpha-amino acid + A + H2O = a 2-oxocarboxylate + AH2 + NH4(+). It participates in amino-acid degradation; D-alanine degradation; NH(3) and pyruvate from D-alanine: step 1/1. Its function is as follows. Oxidative deamination of D-amino acids. The chain is D-amino acid dehydrogenase from Klebsiella pneumoniae (strain 342).